The primary structure comprises 114 residues: UPF0212 protein Mbur_0968 (114 aa).

This sequence belongs to the UPF0212 family.

This Methanococcoides burtonii (strain DSM 6242 / NBRC 107633 / OCM 468 / ACE-M) protein is UPF0212 protein Mbur_0968.